The primary structure comprises 471 residues: uncharacterized protein (471 aa).

The disordered stretch occupies residues 13–57; it reads KGGATIGATPMESDSSVSALSGSSASKVSRRGRRRSHLASKSSAP. Over residues 27-39 the composition is skewed to low complexity; sequence SSVSALSGSSASK. The span at 40–50 shows a compositional bias: basic residues; that stretch reads VSRRGRRRSHL. 2 consecutive CCHC-type zinc fingers follow at residues 397–414 and 417–434; these read YACH…ECRQ and SVCR…KCQN. Residues 438-457 form a gag-like cysteine motif region; the sequence is CRNCRHRGQPSGHYMLSNAC.

It to corresponding ORF of B.mori (R1BM).

This is an uncharacterized protein from Drosophila melanogaster (Fruit fly).